A 250-amino-acid polypeptide reads, in one-letter code: Lymphotoxin-beta (250 aa).

The Cytoplasmic segment spans residues 1 to 26; sequence MGAPGLETRAGGPNGKSYLLLASVGA. Residues 27–47 form a helical; Signal-anchor for type II membrane protein membrane-spanning segment; sequence AVLGTLLLSVPITVLTVLALM. Residues 48–250 lie on the Extracellular side of the membrane; the sequence is PQEQGGQVAD…KTFFGAVMVG (203 aa). Residues 87-249 enclose the THD domain; the sequence is PAAHLIGIAK…GKTFFGAVMV (163 aa). Residue N228 is glycosylated (N-linked (GlcNAc...) asparagine).

This sequence belongs to the tumor necrosis factor family. In terms of assembly, heterotrimer of either two LTB and one LTA subunits or (less prevalent) two LTA and one LTB subunits.

Its subcellular location is the membrane. In terms of biological role, cytokine that binds to LTBR/TNFRSF3. May play a specific role in immune response regulation. Provides the membrane anchor for the attachment of the heterotrimeric complex to the cell surface. This is Lymphotoxin-beta (LTB) from Notamacropus eugenii (Tammar wallaby).